A 315-amino-acid chain; its full sequence is MNIEWFAIGVGAIVVLYILYHFIKMIWSILGLYVFYQPIDLKKKAGASWAVITGGTDGIGKSFSFELAKRGFNIYIVSRTQSKLEQTKKEIMEKYSNVEVRFATFDFTNPSISDYKKLLSQLNEVSIGMLINNVGMLFEYPENLHKTVGGIDVVANVTILNTLPVTLLSAGILPQMVSRKTGIIVNIGSVAGAAKMAEWSVYSASKKYVEWLTGCLRKEYEHQGIIIQAITPALVATKLSGHTETSLFCPDSATFAKSALNTVGHTSQTTGYINHQIQCEMLALFPECFLDSFVKKSSVETREKALAKKENKHLL.

An NADP(+)-binding site is contributed by Ala-47–Ile-76. Residue Tyr-202 is part of the active site.

This sequence belongs to the short-chain dehydrogenases/reductases (SDR) family. 17-beta-HSD 3 subfamily.

The polypeptide is Putative steroid dehydrogenase 3 (stdh-3) (Caenorhabditis elegans).